The sequence spans 803 residues: MDEFVTAEDLVHEYSVLQEPDSVVNWSRYIAAKRDDPCSVSWVYERCLQALPAQWEVWREYLQFRMRLLDGVCAVQHAAEFEKVNRLFWRCVEHNAAVVEAWRLFLGHAQRQGALALVRQVVDAALRGVGLAKHRTVWEDVVAYIEELLPAEETDLGEEQDLHELVRGALFGGAGAEDAGADIWSSAMLRRYIQVAEDAEAVLALLQRTHDYATVVAVYEKHVLPVTRAKHKGRQSYESQFRYLVALDHTGATAKLEDAVARCAQLFPERAPSLTIFLAKHYVKQGNYNRCTDVLTDSLKHTAKSSEFASLYDFLVVFEESLIEVVLEHLQEHPENEERWGADLERHTDQLDGLLADHALLLNDLKLRQEPDNVKHWLDRVELFDKAASKASVYADAIASINYKSQTVPGQLGTLWWQYAQLYIDDGQYETAKTILDKALNVPYNFLQDPELIWTKWAEEELKRAGLDAAMQVLSHALQIPDDHELLRDKFESHEKMPAQTVIFSSLKLWSFYIDLLEASSESDEHLERTKAAYEATIQLKIATPLLFVNYAHYLQDKGNHVESFSIYERAVDIFPAETAFEIWDIYIGEALKYGLPKEQIRDLFESSLKMANEGVECKPFFLLYAKFERDNGMIETAANILHRACRAAQTMDAKRSLWTLCLNWCRQELGGSYARALYEECIQALPNHVAVVYVLEYAKVEEGLKQVKRARALLQYGARLLHPANNADLWEYWELFELRHGNKDTYKDMLQLKRKVEELLEGDGLPVPNQIGNIAFVASTDGLQNPGGESTNINNDELELDM.

13 HAT repeats span residues 3 to 34 (EFVTAEDLVHEYSVLQEPDSVVNWSRYIAAKR), 35 to 67 (DDPCSVSWVYERCLQALPAQWEVWREYLQFRMR), 79 to 111 (AEFEKVNRLFWRCVEHNAAVVEAWRLFLGHAQR), 113 to 147 (GALALVRQVVDAALRGVGLAKHRTVWEDVVAYIEE), 393 to 425 (VYADAIASINYKSQTVPGQLGTLWWQYAQLYID), 427 to 463 (GQYETAKTILDKALNVPYNFLQDPELIWTKWAEEELK), 482 to 519 (DDHELLRDKFESHEKMPAQTVIFSSLKLWSFYIDLLEA), 525 to 557 (EHLERTKAAYEATIQLKIATPLLFVNYAHYLQD), 559 to 593 (GNHVESFSIYERAVDIFPAETAFEIWDIYIGEALK), 596 to 631 (LPKEQIRDLFESSLKMANEGVECKPFFLLYAKFERD), 633 to 668 (GMIETAANILHRACRAAQTMDAKRSLWTLCLNWCRQ), 670 to 704 (LGGSYARALYEECIQALPNHVAVVYVLEYAKVEEG), and 708 to 740 (VKRARALLQYGARLLHPANNADLWEYWELFELR).

This sequence belongs to the crooked-neck family. Associated with the spliceosome.

It localises to the nucleus. Its function is as follows. Involved in pre-mRNA splicing and cell cycle progression. The polypeptide is Pre-mRNA-splicing factor SYF1 (SYF1) (Eremothecium gossypii (strain ATCC 10895 / CBS 109.51 / FGSC 9923 / NRRL Y-1056) (Yeast)).